A 146-amino-acid polypeptide reads, in one-letter code: Large ribosomal subunit protein bL17 (146 aa).

The tract at residues 118–146 (RDPAAKGQDSGPKPEVASDEDEAGEAAAA) is disordered. The segment covering 134 to 146 (ASDEDEAGEAAAA) has biased composition (acidic residues).

Belongs to the bacterial ribosomal protein bL17 family. As to quaternary structure, part of the 50S ribosomal subunit. Contacts protein L32.

This is Large ribosomal subunit protein bL17 from Acidiphilium cryptum (strain JF-5).